A 191-amino-acid chain; its full sequence is Large ribosomal subunit protein eL15 (191 aa).

Belongs to the eukaryotic ribosomal protein eL15 family.

The polypeptide is Large ribosomal subunit protein eL15 (rpl15e) (Pyrobaculum aerophilum (strain ATCC 51768 / DSM 7523 / JCM 9630 / CIP 104966 / NBRC 100827 / IM2)).